The primary structure comprises 274 residues: Large ribosomal subunit protein uL2cz/uL2cy (274 aa).

Disordered regions lie at residues 1–21 (MAIHLYKTSTPGTRNGAVDSQ) and 225–274 (PVDH…RRSK).

Belongs to the universal ribosomal protein uL2 family. In terms of assembly, part of the 50S ribosomal subunit.

It localises to the plastid. The protein resides in the chloroplast. The protein is Large ribosomal subunit protein uL2cz/uL2cy (rpl2-A) of Gossypium barbadense (Sea Island cotton).